The chain runs to 100 residues: uncharacterized protein (100 aa).

Residues 1–86 form a disordered region; the sequence is MRGTRRGPSG…RHRPPEVTEP (86 aa). Over residues 35–48 the composition is skewed to pro residues; the sequence is DTPPPRAPPPPPPL.

This is an uncharacterized protein from Human herpesvirus 6A (strain Uganda-1102) (HHV-6 variant A).